We begin with the raw amino-acid sequence, 96 residues long: uncharacterized protein (96 aa).

The first 21 residues, 1–21 (MLASVLILGAIAVGSAIPTIA), serve as a signal peptide directing secretion.

This is an uncharacterized protein from Archaeoglobus fulgidus (strain ATCC 49558 / DSM 4304 / JCM 9628 / NBRC 100126 / VC-16).